Reading from the N-terminus, the 201-residue chain is Glutathione peroxidase 1 (201 aa).

Ser-32 carries the phosphoserine modification. Sec-47 is an active-site residue. Position 47 (Sec-47) is a non-standard amino acid, selenocysteine. N6-acetyllysine; alternate is present on residues Lys-86, Lys-112, and Lys-146. Lys-86, Lys-112, and Lys-146 each carry N6-succinyllysine; alternate. Phosphoserine occurs at positions 195 and 199.

Belongs to the glutathione peroxidase family. In terms of assembly, homotetramer. Interacts with MIEN1. In terms of processing, during periods of oxidative stress, Sec-47 may react with a superoxide radical, irreversibly lose hydroselenide and be converted to dehydroalanine.

It is found in the cytoplasm. The catalysed reaction is 2 glutathione + H2O2 = glutathione disulfide + 2 H2O. The enzyme catalyses (12S)-hydroperoxy-(5Z,8Z,10E,14Z)-eicosatetraenoate + 2 glutathione = (12S)-hydroxy-(5Z,8Z,10E,14Z)-eicosatetraenoate + glutathione disulfide + H2O. Its function is as follows. Protects the hemoglobin in erythrocytes from oxidative breakdown. In platelets, plays a crucial role of glutathione peroxidase in the arachidonic acid metabolism. In Hylobates lar (Lar gibbon), this protein is Glutathione peroxidase 1 (GPX1).